The sequence spans 563 residues: Arginine--tRNA ligase (563 aa).

The short motif at 122-132 is the 'HIGH' region element; sequence PNIAKPMSMGH.

The protein belongs to the class-I aminoacyl-tRNA synthetase family. In terms of assembly, monomer.

It localises to the cytoplasm. It carries out the reaction tRNA(Arg) + L-arginine + ATP = L-arginyl-tRNA(Arg) + AMP + diphosphate. The polypeptide is Arginine--tRNA ligase (Ligilactobacillus salivarius (strain UCC118) (Lactobacillus salivarius)).